The chain runs to 1154 residues: CRISPR-associated endoribonuclease Cas13a (1154 aa).

HEPN-like fold regions lie at residues 330–466 (TTSN…RFIN) and 923–1154 (FVHL…EMKK).

Belongs to the CRISPR-associated endoribonuclease Cas13a family. It depends on a divalent metal cation as a cofactor.

With respect to regulation, target RNA acts as an activator for non-specific ssRNA degradation. In terms of biological role, CRISPR (clustered regularly interspaced short palindromic repeat), is an adaptive immune system that provides protection against mobile genetic elements (viruses, transposable elements and conjugative plasmids). CRISPR clusters contain sequences complementary to antecedent mobile elements and target invading nucleic acids. Unlike many single-component effectors, this CRISPR-Cas system targets RNA. CRISPR clusters are transcribed from pre-CRISPR RNA (crRNA) and processed into crRNA by this protein. Cleaves linear target ssRNA in a pre-crRNA-dependent fashion, preferentially before U residues. Binding a viable target RNA target activates this protein for non-specific RNA degradation in vitro (called collateral RNA degradation), which is fairly sensitive as it requires picomolar levels of viable target RNA. This Paludibacter propionicigenes (strain DSM 17365 / JCM 13257 / WB4) protein is CRISPR-associated endoribonuclease Cas13a.